Consider the following 413-residue polypeptide: Acetate kinase (413 aa).

Asn7 lines the Mg(2+) pocket. Residue Lys14 coordinates ATP. A substrate-binding site is contributed by Arg98. The active-site Proton donor/acceptor is Asp157. ATP-binding positions include 216–220 (HIGNG), 291–293 (DLR), and 339–343 (GVGEN). Glu392 contacts Mg(2+).

Belongs to the acetokinase family. In terms of assembly, homodimer. The cofactor is Mg(2+). Requires Mn(2+) as cofactor.

Its subcellular location is the cytoplasm. It carries out the reaction acetate + ATP = acetyl phosphate + ADP. It participates in metabolic intermediate biosynthesis; acetyl-CoA biosynthesis; acetyl-CoA from acetate: step 1/2. Its function is as follows. Catalyzes the formation of acetyl phosphate from acetate and ATP. Can also catalyze the reverse reaction. The polypeptide is Acetate kinase (Synechocystis sp. (strain ATCC 27184 / PCC 6803 / Kazusa)).